The following is a 213-amino-acid chain: Ribosomal RNA large subunit methyltransferase E (213 aa).

5 residues coordinate S-adenosyl-L-methionine: G59, F61, D79, D97, and D121. K161 serves as the catalytic Proton acceptor.

It belongs to the class I-like SAM-binding methyltransferase superfamily. RNA methyltransferase RlmE family.

It localises to the cytoplasm. It catalyses the reaction uridine(2552) in 23S rRNA + S-adenosyl-L-methionine = 2'-O-methyluridine(2552) in 23S rRNA + S-adenosyl-L-homocysteine + H(+). Functionally, specifically methylates the uridine in position 2552 of 23S rRNA at the 2'-O position of the ribose in the fully assembled 50S ribosomal subunit. In Myxococcus xanthus (strain DK1622), this protein is Ribosomal RNA large subunit methyltransferase E.